Consider the following 118-residue polypeptide: Small ribosomal subunit protein uS13 (118 aa).

The interval 94–118 is disordered; that stretch reads SLPLRGQRTKTNARTRKGPRKPIRK.

The protein belongs to the universal ribosomal protein uS13 family. As to quaternary structure, part of the 30S ribosomal subunit. Forms a loose heterodimer with protein S19. Forms two bridges to the 50S subunit in the 70S ribosome.

Located at the top of the head of the 30S subunit, it contacts several helices of the 16S rRNA. In the 70S ribosome it contacts the 23S rRNA (bridge B1a) and protein L5 of the 50S subunit (bridge B1b), connecting the 2 subunits; these bridges are implicated in subunit movement. Contacts the tRNAs in the A and P-sites. In Shewanella sp. (strain W3-18-1), this protein is Small ribosomal subunit protein uS13.